The sequence spans 477 residues: Salivary plasminogen activator alpha 2 (477 aa).

A signal peptide spans 1–36; that stretch reads MVNTMKTKLLCVLLLCGAVFSLPRQETYRQLARGSR. Residues 40–82 form the Fibronectin type-I domain; that stretch reads VACRDEKTQMIYQQQESWLRPEVRSKRVEHCRCDRGLAQCHTV. Cystine bridges form between C42/C72, C70/C79, C87/C98, C92/C109, C111/C120, C128/C209, C149/C191, C180/C204, C214/C345, C257/C273, C265/C334, C359/C434, C391/C407, and C424/C452. Positions 83 to 121 constitute an EGF-like domain; sequence PVKSCSELRCFNGGTCWQAASFSDFVCQCPKGYTGKQCE. The 82-residue stretch at 128-209 folds into the Kringle domain; that stretch reads CYKDQGVTYR…ILEFCSVPVC (82 aa). A glycan (N-linked (GlcNAc...) asparagine) is linked at N185. A Peptidase S1 domain is found at 226–476; the sequence is STGGLFTDIT…YLGWIRDNMR (251 aa). Catalysis depends on charge relay system residues H272 and D321. N-linked (GlcNAc...) asparagine glycosylation occurs at N398. S428 acts as the Charge relay system in catalysis.

It belongs to the peptidase S1 family. In terms of assembly, monomer.

It is found in the secreted. It catalyses the reaction Specific cleavage of Arg-|-Val bond in plasminogen to form plasmin.. Its activity is regulated as follows. Activity toward plasminogen is stimulated in the presence of fibrin I. Functionally, probably essential to support the feeding habits of this exclusively haematophagous animal. Probable potent thrombolytic agent. This Desmodus rotundus (Vampire bat) protein is Salivary plasminogen activator alpha 2.